The chain runs to 611 residues: Aspartate--tRNA(Asp/Asn) ligase (611 aa).

L-aspartate is bound at residue glutamate 174. The interval 198-201 (QLFK) is aspartate. Arginine 220 serves as a coordination point for L-aspartate. ATP is bound by residues 220 to 222 (RDE) and glutamine 229. Histidine 467 provides a ligand contact to L-aspartate. Glutamate 501 serves as a coordination point for ATP. Arginine 508 provides a ligand contact to L-aspartate. 553–556 (GLDR) contributes to the ATP binding site.

Belongs to the class-II aminoacyl-tRNA synthetase family. Type 1 subfamily. In terms of assembly, homodimer.

The protein resides in the cytoplasm. The enzyme catalyses tRNA(Asx) + L-aspartate + ATP = L-aspartyl-tRNA(Asx) + AMP + diphosphate. Functionally, aspartyl-tRNA synthetase with relaxed tRNA specificity since it is able to aspartylate not only its cognate tRNA(Asp) but also tRNA(Asn). Reaction proceeds in two steps: L-aspartate is first activated by ATP to form Asp-AMP and then transferred to the acceptor end of tRNA(Asp/Asn). This Albidiferax ferrireducens (strain ATCC BAA-621 / DSM 15236 / T118) (Rhodoferax ferrireducens) protein is Aspartate--tRNA(Asp/Asn) ligase.